The chain runs to 216 residues: Probable nicotinate-nucleotide adenylyltransferase (216 aa).

It belongs to the NadD family.

It catalyses the reaction nicotinate beta-D-ribonucleotide + ATP + H(+) = deamido-NAD(+) + diphosphate. The protein operates within cofactor biosynthesis; NAD(+) biosynthesis; deamido-NAD(+) from nicotinate D-ribonucleotide: step 1/1. In terms of biological role, catalyzes the reversible adenylation of nicotinate mononucleotide (NaMN) to nicotinic acid adenine dinucleotide (NaAD). This chain is Probable nicotinate-nucleotide adenylyltransferase, found in Shewanella baltica (strain OS195).